Consider the following 343-residue polypeptide: MRN complex-interacting protein (343 aa).

The disordered stretch occupies residues 75 to 104; it reads EETVSASEEENVGHQQAGNVKQQEKSQPSE. The span at 87 to 104 shows a compositional bias: polar residues; sequence GHQQAGNVKQQEKSQPSE. Residues serine 100 and serine 115 each carry the phosphoserine modification. 3 disordered regions span residues 128–178, 193–212, and 230–324; these read SKQP…WGPQ, SPCL…RGPG, and AQFV…AQNP. The Nuclear localization signal (NLS) signature appears at 148-151; that stretch reads RKRK. Residues 193–202 show a composition bias toward polar residues; sequence SPCLQENSAD. Positions 213 to 237 are necessary for the association with the MRN complex; sequence KELWSPIQQVTATSSKWAQFVLPPR. Positions 240 to 255 are enriched in basic and acidic residues; sequence SHVDSEQPRSLQRDPR.

Belongs to the MRNIP family. As to quaternary structure, associates with the MRE11-RAD50-NBN (MRN) damage-sensing complex; this association is constitutive. Interacts with MRE11. Interacts with NBN. Interacts with RAD50. Phosphorylated; phosphorylation is constitutive and occurs in the absence of any DNA-damaging stimulus. Phosphorylation on Ser-115 is necessary for its nuclear retention.

It is found in the nucleus. The protein localises to the nucleoplasm. Plays a role in the cellular response to DNA damage and the maintenance of genome stability through its association with the MRN damage-sensing complex. Promotes chromatin loading and activity of the MRN complex to facilitate subsequent ATM-mediated DNA damage response signaling and DNA repair. In Homo sapiens (Human), this protein is MRN complex-interacting protein.